Here is a 142-residue protein sequence, read N- to C-terminus: MAPSTKAASAKKAVVKGSNGSKALKVRTSTTFRLPKTLKLTRAPKYARKAVPHYQRLDNYKVIVAPIASETAMKKVEDGNTLVFQVDIKANKHQIKQAVKDLYEVDVLAVNTLIRPNGTKKAYVRLTADHDALDIANKIGYI.

Belongs to the universal ribosomal protein uL23 family.

Its function is as follows. This protein binds to a specific region on the 26S rRNA. In Cyberlindnera jadinii (Torula yeast), this protein is Large ribosomal subunit protein uL23 (RPL25).